Reading from the N-terminus, the 265-residue chain is U6 snRNA phosphodiesterase 1 (265 aa).

The segment at 1–72 is disordered; it reads MSAAPLVGYS…DSTKHGGRVR (72 aa). Residues 20–31 are compositionally biased toward basic and acidic residues; the sequence is DGMRTRPGDGSH. H120 acts as the Proton acceptor in catalysis. 120–122 lines the AMP pocket; that stretch reads HLS. UMP-binding positions include Q164, Y202, and 206 to 210; that span reads SFHLS. Residues Y202 and 204–210 contribute to the AMP site; that span reads DPSFHLS. H208 acts as the Proton donor in catalysis.

It belongs to the 2H phosphoesterase superfamily. USB1 family. Interacts with PLRG1, CDC5L and PRPF19.

Its subcellular location is the nucleus. It carries out the reaction a 3'-end uridylyl-uridine-RNA = a 3'-end 2',3'-cyclophospho-uridine-RNA + uridine. The enzyme catalyses a 3'-end uridylyl-adenosine-RNA = a 3'-end 2',3'-cyclophospho-uridine-RNA + adenosine. With respect to regulation, 3'-5' RNA exonuclease activity is inhibited by a 3' phosphate terminated RNA. Its function is as follows. 3'-5' RNA exonuclease that trims the 3' end of oligo(U) and oligo(A) tracts of the pre-U6 small nuclear RNA (snRNA) molecule, leading to the formation of a mature U6 snRNA 3' end-terminated with a 2',3'-cyclic phosphate. Participates in the U6 snRNA 3' end processing that prevents U6 snRNA degradation. In addition also removes uridines from the 3' end of U6atac snRNA and possibly the vault RNA VTRNA1-1. The chain is U6 snRNA phosphodiesterase 1 from Homo sapiens (Human).